The following is a 183-amino-acid chain: Ribosome-recycling factor (183 aa).

The protein belongs to the RRF family.

It localises to the cytoplasm. Functionally, responsible for the release of ribosomes from messenger RNA at the termination of protein biosynthesis. May increase the efficiency of translation by recycling ribosomes from one round of translation to another. The sequence is that of Ribosome-recycling factor from Christiangramia forsetii (strain DSM 17595 / CGMCC 1.15422 / KT0803) (Gramella forsetii).